Reading from the N-terminus, the 77-residue chain is Acyl carrier protein (77 aa).

The region spanning 1–76 (MSLEDDVKAI…DVIKYIQEHQ (76 aa)) is the Carrier domain. At serine 36 the chain carries O-(pantetheine 4'-phosphoryl)serine.

It belongs to the acyl carrier protein (ACP) family. In terms of processing, 4'-phosphopantetheine is transferred from CoA to a specific serine of apo-ACP by AcpS. This modification is essential for activity because fatty acids are bound in thioester linkage to the sulfhydryl of the prosthetic group.

The protein resides in the cytoplasm. The protein operates within lipid metabolism; fatty acid biosynthesis. Carrier of the growing fatty acid chain in fatty acid biosynthesis. This is Acyl carrier protein from Chlamydia trachomatis serovar L2 (strain ATCC VR-902B / DSM 19102 / 434/Bu).